We begin with the raw amino-acid sequence, 489 residues long: Blue-light-activated histidine kinase (489 aa).

Residues 19 to 93 (ATDPFRAAVE…AIKSAIAAEK (75 aa)) form the PAS domain. Residue C69 is modified to S-4a-FMN cysteine. PAC domains are found at residues 93–147 (KPID…ELEK) and 232–281 (YSIE…NKAL). Positions 259–341 (NPLVLGIVQD…LLKENWAGAT (83 aa)) are HWE histidine kinase domain. H288 is modified (phosphohistidine; by autocatalysis).

In terms of processing, FMN binds covalently to cysteine after exposure to blue light and this bond is spontaneously broken in the dark.

The catalysed reaction is ATP + protein L-histidine = ADP + protein N-phospho-L-histidine.. Photosensitive kinase that is involved in increased bacterial virulence upon exposure to light. Once ejected from an infected animal host, sunlight acts as an environmental signal that increases the virulence of the bacterium, preparing it for infection of the next host. This photoreceptor protein is directly related to the bacterium's survival and replication within host macrophages, as it is required for optimal replication of bacteria inside macrophages. In Brucella abortus (strain 2308), this protein is Blue-light-activated histidine kinase.